We begin with the raw amino-acid sequence, 293 residues long: MDLSEDQIRGLPHHELLGHFLQMREEFNEFQTSSAEIEKMMDSELDDLKTQLKKAETRVQQMTTEQIRNKDRQDDSRVQFAQVEEQLRRENSHLHEQCESQRERIRKLEQRNDVLETSERNKEYLASDLGSKLDHAIEKIAMLESELYERQVAAEEMHRLREEQLRTTERPRLIVEPLRNDPEILPDEPSPGPSKEEFKMSSEDVFMEDVQHHEDVRMEETIAKIDEVRIDDNKNIQEKSQRVSTGTGAGACINRIVKDLMTKVERLDSILSTIRVSNNSSNNNSSHLTTTRA.

Positions 36-147 (EIEKMMDSEL…EKIAMLESEL (112 aa)) form a coiled coil. Residues 239-293 (KSQRVSTGTGAGACINRIVKDLMTKVERLDSILSTIRVSNNSSNNNSSHLTTTRA) form a required for interaction with unc-83 isoform c region.

Belongs to the nudE family. As to quaternary structure, component of a dynein-regulating complex composed of at least lis-1 and nud-2. Interacts with lis-1; the interaction is direct. Interacts (via C-terminus) with unc-83; the interaction is direct, and is required for recruitment of nud-2 to the nuclear envelope. As to expression, expressed in ventral cord neurons, the pharynx, seam cells of the hypodermis and in vulval muscle cells.

Its subcellular location is the nucleus envelope. In terms of biological role, part of a complex with lis-1, which is recruited to the nuclear envelope by unc-83, where, in turn, it recruits dynein to the nuclear surface and regulates nuclear migration in hypodermal precursor cells. Plays a role in GABAergic synaptic vesicle localization in the ventral nerve cord. The polypeptide is Protein nud-2 (Caenorhabditis elegans).